Reading from the N-terminus, the 326-residue chain is ATP synthase subunit gamma, mitochondrial (326 aa).

Residues 1–45 (MAMAALRREGRRLAAAPFTSPTPLNALRSSLVSPSEEIGLSGVRS) constitute a mitochondrion transit peptide.

Belongs to the ATPase gamma chain family. F-type ATPases have 2 components, CF(1) - the catalytic core - and CF(0) - the membrane proton channel. CF(1) has five subunits: alpha(3), beta(3), gamma(1), delta(1), epsilon(1). CF(0) has three main subunits: a, b and c.

It localises to the mitochondrion. The protein localises to the mitochondrion inner membrane. Mitochondrial membrane ATP synthase (F(1)F(0) ATP synthase or Complex V) produces ATP from ADP in the presence of a proton gradient across the membrane which is generated by electron transport complexes of the respiratory chain. F-type ATPases consist of two structural domains, F(1) - containing the extramembraneous catalytic core, and F(0) - containing the membrane proton channel, linked together by a central stalk and a peripheral stalk. During catalysis, ATP synthesis in the catalytic domain of F(1) is coupled via a rotary mechanism of the central stalk subunits to proton translocation. Part of the complex F(1) domain and the central stalk which is part of the complex rotary element. The gamma subunit protrudes into the catalytic domain formed of alpha(3)beta(3). Rotation of the central stalk against the surrounding alpha(3)beta(3) subunits leads to hydrolysis of ATP in three separate catalytic sites on the beta subunits. This is ATP synthase subunit gamma, mitochondrial (ATPC) from Ipomoea batatas (Sweet potato).